The following is a 264-amino-acid chain: Thiazole synthase (264 aa).

The active-site Schiff-base intermediate with DXP is the lysine 101. Residues glycine 162, 188 to 189, and 210 to 211 each bind 1-deoxy-D-xylulose 5-phosphate; these read AG and NT.

Belongs to the ThiG family. As to quaternary structure, homotetramer. Forms heterodimers with either ThiH or ThiS.

The protein resides in the cytoplasm. The catalysed reaction is [ThiS sulfur-carrier protein]-C-terminal-Gly-aminoethanethioate + 2-iminoacetate + 1-deoxy-D-xylulose 5-phosphate = [ThiS sulfur-carrier protein]-C-terminal Gly-Gly + 2-[(2R,5Z)-2-carboxy-4-methylthiazol-5(2H)-ylidene]ethyl phosphate + 2 H2O + H(+). Its pathway is cofactor biosynthesis; thiamine diphosphate biosynthesis. In terms of biological role, catalyzes the rearrangement of 1-deoxy-D-xylulose 5-phosphate (DXP) to produce the thiazole phosphate moiety of thiamine. Sulfur is provided by the thiocarboxylate moiety of the carrier protein ThiS. In vitro, sulfur can be provided by H(2)S. The sequence is that of Thiazole synthase from Chromobacterium violaceum (strain ATCC 12472 / DSM 30191 / JCM 1249 / CCUG 213 / NBRC 12614 / NCIMB 9131 / NCTC 9757 / MK).